Here is a 160-residue protein sequence, read N- to C-terminus: Transcriptional regulator MraZ (160 aa).

SpoVT-AbrB domains follow at residues 5–51 and 80–123; these read TFEK…GKAL and MAKL…EREA.

This sequence belongs to the MraZ family. In terms of assembly, forms oligomers.

It is found in the cytoplasm. Its subcellular location is the nucleoid. This chain is Transcriptional regulator MraZ, found in Phenylobacterium zucineum (strain HLK1).